A 275-amino-acid polypeptide reads, in one-letter code: MSNSRQHQGHFARKRFGQNFLVDHGVIDAIVAAIRPERGERMVEIGPGLGALTGPVIARLATPGSPLHAVELDRDLIGRLEQRFGELLELHAGDALTFDFGSIARPGDEPSLRIIGNLPYNISSPLLFHLMSFAPVVIDQHFMLQNEVVERMVAEPGTKAFSRLSVMLQYRYVMDKLIDVPPESFQPPPKVDSAIVRMIPHAPHELPAVDPAVLGEVVTAAFSQRRKMLRNTLGGYRDLVDFDALGFDLARRAEDIGVDEYVRVAQAVASARASG.

S-adenosyl-L-methionine contacts are provided by asparagine 19, leucine 21, glycine 46, glutamate 71, aspartate 94, and asparagine 117.

Belongs to the class I-like SAM-binding methyltransferase superfamily. rRNA adenine N(6)-methyltransferase family. RsmA subfamily.

It is found in the cytoplasm. It carries out the reaction adenosine(1518)/adenosine(1519) in 16S rRNA + 4 S-adenosyl-L-methionine = N(6)-dimethyladenosine(1518)/N(6)-dimethyladenosine(1519) in 16S rRNA + 4 S-adenosyl-L-homocysteine + 4 H(+). Specifically dimethylates two adjacent adenosines (A1518 and A1519) in the loop of a conserved hairpin near the 3'-end of 16S rRNA in the 30S particle. May play a critical role in biogenesis of 30S subunits. This is Ribosomal RNA small subunit methyltransferase A from Burkholderia mallei (strain NCTC 10247).